The primary structure comprises 130 residues: Small ribosomal subunit protein uS9 (130 aa).

It belongs to the universal ribosomal protein uS9 family.

The sequence is that of Small ribosomal subunit protein uS9 from Aliivibrio fischeri (strain MJ11) (Vibrio fischeri).